Here is a 512-residue protein sequence, read N- to C-terminus: Glutathione-binding protein GsiB (512 aa).

Positions 1 to 26 (MARAVHRSGLVALGIATALMASCAFA) are cleaved as a signal peptide.

The protein belongs to the bacterial solute-binding protein 5 family. The complex is composed of two ATP-binding proteins (GsiA), two transmembrane proteins (GsiC and GsiD) and a solute-binding protein (GsiB).

Its subcellular location is the periplasm. Part of the ABC transporter complex GsiABCD involved in glutathione import. Binds glutathione. This chain is Glutathione-binding protein GsiB, found in Escherichia coli O1:K1 / APEC.